The following is a 102-amino-acid chain: PE family immunomodulator PE15 (102 aa).

Residues 3-91 enclose the PE domain; sequence LRVVPESLAG…SGASYAARDA (89 aa).

It belongs to the mycobacterial PE family.

The protein localises to the secreted. It localises to the cell envelope. The protein resides in the cell surface. In terms of biological role, may play a pivotal role in the evasion of host immune response by M.tuberculosis. Mediates production of IL-10 via activation of the p38 and ERK1/2 mitogen-activated protein kinase (MAPK) signaling pathways. The protein is PE family immunomodulator PE15 (PE15) of Mycobacterium tuberculosis (strain CDC 1551 / Oshkosh).